Here is a 226-residue protein sequence, read N- to C-terminus: Large ribosomal subunit protein mL67 (226 aa).

The protein belongs to the mitochondrion-specific ribosomal protein mL67 family. In terms of assembly, component of the mitochondrial large ribosomal subunit (mt-LSU). Mature yeast 74S mitochondrial ribosomes consist of a small (37S) and a large (54S) subunit. The 37S small subunit contains a 15S ribosomal RNA (15S mt-rRNA) and 34 different proteins. The 54S large subunit contains a 21S rRNA (21S mt-rRNA) and 46 different proteins.

It is found in the nucleus. The protein resides in the mitochondrion. In terms of biological role, component of the mitochondrial ribosome (mitoribosome), a dedicated translation machinery responsible for the synthesis of mitochondrial genome-encoded proteins, including at least some of the essential transmembrane subunits of the mitochondrial respiratory chain. The mitoribosomes are attached to the mitochondrial inner membrane and translation products are cotranslationally integrated into the membrane. mL67/MHR1 also has extraribosomal functions, being involved in regulation of mitochondrial DNA recombination, maintenance and repair, and generation of homoplasmic cells. mL67/MHR1 also acts as transcription factor involved in regulation of RNA polymerase II-dependent transcription. This Saccharomyces cerevisiae (strain ATCC 204508 / S288c) (Baker's yeast) protein is Large ribosomal subunit protein mL67 (MHR1).